The chain runs to 341 residues: tRNA N6-adenosine threonylcarbamoyltransferase (341 aa).

Residues His-111 and His-115 each contribute to the Fe cation site. Residues Leu-134 to Gly-138, Asp-167, Gly-180, and Asn-276 each bind substrate. Asp-304 lines the Fe cation pocket.

It belongs to the KAE1 / TsaD family. Requires Fe(2+) as cofactor.

Its subcellular location is the cytoplasm. The catalysed reaction is L-threonylcarbamoyladenylate + adenosine(37) in tRNA = N(6)-L-threonylcarbamoyladenosine(37) in tRNA + AMP + H(+). Functionally, required for the formation of a threonylcarbamoyl group on adenosine at position 37 (t(6)A37) in tRNAs that read codons beginning with adenine. Is involved in the transfer of the threonylcarbamoyl moiety of threonylcarbamoyl-AMP (TC-AMP) to the N6 group of A37, together with TsaE and TsaB. TsaD likely plays a direct catalytic role in this reaction. In Pseudomonas putida (strain ATCC 700007 / DSM 6899 / JCM 31910 / BCRC 17059 / LMG 24140 / F1), this protein is tRNA N6-adenosine threonylcarbamoyltransferase.